The sequence spans 659 residues: ATP-binding cassette sub-family D member 3 (659 aa).

The interval 2 to 61 is interaction with PEX19; the sequence is AAFSKYLTARNSSLAGAAFLLFCLLHKRRRALGLHGKKSGKPPLQNNEKEGKKERAVVDK. N-linked (GlcNAc...) asparagine glycosylation is present at asparagine 12. Position 61 is an N6-acetyllysine (lysine 61). Residues 84–104 form a helical membrane-spanning segment; the sequence is GYLILIAVMLVSRTYCDVWMI. The ABC transmembrane type-1 domain maps to 85–372; sequence YLILIAVMLV…MLLRMSQALG (288 aa). A glycan (N-linked (GlcNAc...) asparagine) is linked at asparagine 106. The chain crosses the membrane as a helical span at residues 126–146; it reads LFNFIAAMPLISLVNNFLKYG. N-linked (GlcNAc...) asparagine glycosylation occurs at asparagine 206. The helical transmembrane segment at 224–244 threads the bilayer; the sequence is AIGAQGPASMMAYLLVSGLFL. Residue lysine 260 is modified to N6-acetyllysine. Residues 313 to 333 traverse the membrane as a helical segment; that stretch reads MGFIDSIIAKYIATVVGYLVV. The residue at position 399 (lysine 399) is an N6-acetyllysine. Serine 424 carries the phosphoserine modification. Residues 434 to 659 enclose the ABC transporter domain; the sequence is INADNIIKFD…ITEDTVEFGS (226 aa). 473–480 lines the ATP pocket; it reads GPNGCGKS. Lysine 533 bears the N6-acetyllysine mark. The residue at position 659 (serine 659) is a Phosphoserine.

Belongs to the ABC transporter superfamily. ABCD family. Peroxisomal fatty acyl CoA transporter (TC 3.A.1.203) subfamily. In terms of assembly, homodimers. Can form heterodimers with ABCD1 and ABCD2. Dimerization is necessary to form an active transporter. Interacts with PEX19; mediates the targeting of ABCD3 to peroxisomes. Ubiquitinated by PEX2 during pexophagy in response to starvation, leading to its degradation.

The protein localises to the peroxisome membrane. The catalysed reaction is a very long-chain fatty acyl-CoA + H2O = a very long-chain fatty acid + CoA + H(+). The enzyme catalyses a very long-chain fatty acid(in) + ATP + H2O = a very long-chain fatty acid(out) + ADP + phosphate + H(+). It carries out the reaction a long-chain fatty acyl-CoA + H2O = a long-chain fatty acid + CoA + H(+). It catalyses the reaction a long-chain fatty acid(in) + ATP + H2O = a long-chain fatty acid(out) + ADP + phosphate + H(+). The catalysed reaction is pristanoyl-CoA + H2O = 2,6,10,14-tetramethylpentadecanoate + CoA + H(+). The enzyme catalyses 2,6,10,14-tetramethylpentadecanoate(in) + ATP + H2O = 2,6,10,14-tetramethylpentadecanoate(out) + ADP + phosphate + H(+). It carries out the reaction hexadecanedioyl-CoA + H2O = hexadecanedioate + CoA + H(+). It catalyses the reaction hexadecanedioate(in) + ATP + H2O = hexadecanedioate(out) + ADP + phosphate + H(+). The catalysed reaction is (5Z,8Z,11Z,14Z,17Z)-eicosapentaenoyl-CoA + H2O = (5Z,8Z,11Z,14Z,17Z)-eicosapentaenoate + CoA + H(+). The enzyme catalyses (5Z,8Z,11Z,14Z,17Z)-eicosapentaenoate(in) + ATP + H2O = (5Z,8Z,11Z,14Z,17Z)-eicosapentaenoate(out) + ADP + phosphate + H(+). It carries out the reaction (4Z,7Z,10Z,13Z,16Z,19Z)-docosahexaenoyl-CoA + H2O = (4Z,7Z,10Z,13Z,16Z,19Z)-docosahexaenoate + CoA + H(+). It catalyses the reaction (4Z,7Z,10Z,13Z,16Z,19Z)-docosahexaenoate(in) + ATP + H2O = (4Z,7Z,10Z,13Z,16Z,19Z)-docosahexaenoate(out) + ADP + phosphate + H(+). Broad substrate specificity ATP-dependent transporter of the ATP-binding cassette (ABC) family that catalyzes the transport of long-chain fatty acids (LCFA)-CoA, dicarboxylic acids-CoA, long-branched-chain fatty acids-CoA and bile acids from the cytosol to the peroxisome lumen for beta-oxydation. Has fatty acyl-CoA thioesterase and ATPase activities. Probably hydrolyzes fatty acyl-CoAs into free fatty acids prior to their ATP-dependent transport into peroxisomes. Thus, play a role in regulation of LCFAs and energy metabolism namely, in the degradation and biosynthesis of fatty acids by beta-oxidation. This is ATP-binding cassette sub-family D member 3 (Abcd3) from Rattus norvegicus (Rat).